We begin with the raw amino-acid sequence, 37 residues long: Photosystem II reaction center protein M (37 aa).

A helical transmembrane segment spans residues 5–25 (ILAFIATALFILVPTAFLLII).

This sequence belongs to the PsbM family. In terms of assembly, PSII is composed of 1 copy each of membrane proteins PsbA, PsbB, PsbC, PsbD, PsbE, PsbF, PsbH, PsbI, PsbJ, PsbK, PsbL, PsbM, PsbT, PsbX, PsbY, PsbZ, Psb30/Ycf12, at least 3 peripheral proteins of the oxygen-evolving complex and a large number of cofactors. It forms dimeric complexes.

The protein localises to the plastid. The protein resides in the chloroplast thylakoid membrane. Its function is as follows. One of the components of the core complex of photosystem II (PSII). PSII is a light-driven water:plastoquinone oxidoreductase that uses light energy to abstract electrons from H(2)O, generating O(2) and a proton gradient subsequently used for ATP formation. It consists of a core antenna complex that captures photons, and an electron transfer chain that converts photonic excitation into a charge separation. This subunit is found at the monomer-monomer interface. The polypeptide is Photosystem II reaction center protein M (Pelargonium hortorum (Common geranium)).